A 241-amino-acid chain; its full sequence is Superantigen-like protein 13 (241 aa).

The N-terminal stretch at 1–26 (MNNNITKKIILSTTLLLLGTASTQFP) is a signal peptide.

Belongs to the staphylococcal/streptococcal toxin family. Interacts with host FPR2; this interaction promotes neutrophil chemotaxis.

Acts as a pathogen alarming molecule by acting on host neutrophil chemotactic factors FPR2. Plays a role of chemoattractant and induces degranulation and oxidative burst in neutrophils. This is Superantigen-like protein 13 from Staphylococcus aureus (strain Newman).